Consider the following 232-residue polypeptide: H-2 class II histocompatibility antigen, E-S beta chain (232 aa).

The interval 1–90 (WFLEYSTSEC…LDKFLVPRRV (90 aa)) is beta-1. The Extracellular portion of the chain corresponds to 1-193 (WFLEYSTSEC…KAQSTSAQNK (193 aa)). 2 disulfides stabilise this stretch: C10–C74 and C112–C168. Residue N14 is glycosylated (N-linked (GlcNAc...) asparagine). Positions 91 to 193 (EPTVTVYPTK…KAQSTSAQNK (103 aa)) are beta-2. One can recognise an Ig-like C1-type domain in the interval 92–182 (PTVTVYPTKT…PSLTDPVTVE (91 aa)). The chain crosses the membrane as a helical span at residues 194-216 (MLSGVGGFVLGLLFLGAGLFIYF). The Cytoplasmic portion of the chain corresponds to 217-232 (RNQKGQSGLQPTGLLS).

Belongs to the MHC class II family. In terms of processing, ubiquitinated in immature dendritic cells leading to down-regulation of MHC class II.

Its subcellular location is the membrane. This is H-2 class II histocompatibility antigen, E-S beta chain (H2-Eb1) from Mus musculus (Mouse).